The sequence spans 218 residues: Protein-L-isoaspartate O-methyltransferase (218 aa).

The active site involves serine 60.

The protein belongs to the methyltransferase superfamily. L-isoaspartyl/D-aspartyl protein methyltransferase family.

The protein localises to the cytoplasm. It catalyses the reaction [protein]-L-isoaspartate + S-adenosyl-L-methionine = [protein]-L-isoaspartate alpha-methyl ester + S-adenosyl-L-homocysteine. Functionally, catalyzes the methyl esterification of L-isoaspartyl residues in peptides and proteins that result from spontaneous decomposition of normal L-aspartyl and L-asparaginyl residues. It plays a role in the repair and/or degradation of damaged proteins. The sequence is that of Protein-L-isoaspartate O-methyltransferase from Roseiflexus sp. (strain RS-1).